Reading from the N-terminus, the 340-residue chain is Glucokinase (340 aa).

17–22 (GDIGGT) is a binding site for ATP.

The protein belongs to the bacterial glucokinase family.

The protein resides in the cytoplasm. The catalysed reaction is D-glucose + ATP = D-glucose 6-phosphate + ADP + H(+). The sequence is that of Glucokinase from Allorhizobium ampelinum (strain ATCC BAA-846 / DSM 112012 / S4) (Agrobacterium vitis (strain S4)).